The primary structure comprises 334 residues: E3 ubiquitin-protein ligase CIP8 (334 aa).

The segment at 111-158 is disordered; the sequence is LNSRNEIDDDEDEDEDDGDEEEEDEEENLTVNDEEDEEDDLRRRNRFP. The segment covering 117–149 has biased composition (acidic residues); that stretch reads IDDDEDEDEDDGDEEEEDEEENLTVNDEEDEED. The RING-type; atypical zinc-finger motif lies at 257–298; it reads CAVCKDGMVMGETGKKLPCGHCYHGDCIVPWLGTRNSCPVCR. Positions 307 to 334 are disordered; sequence EYEEERKKRTSTVSDSAAASSSSSTSRY. Positions 317–334 are enriched in low complexity; sequence STVSDSAAASSSSSTSRY.

Interacts with the RING finger of COP1. Interacts with UBC8 through its N-terminal region. As to expression, expressed in both light- and dark-grown seedlings.

The protein localises to the cytoplasm. The catalysed reaction is S-ubiquitinyl-[E2 ubiquitin-conjugating enzyme]-L-cysteine + [acceptor protein]-L-lysine = [E2 ubiquitin-conjugating enzyme]-L-cysteine + N(6)-ubiquitinyl-[acceptor protein]-L-lysine.. Its pathway is protein modification; protein ubiquitination. In terms of biological role, E3 ubiquitin-protein ligase that mediates ubiquitination and subsequent proteasomal degradation of target proteins. Probably forms a minimal ubiquitin ligase complex in cooperation with the E2 enzyme UBC8. Its interaction with COP1 suggests that it may participate in proteasome-mediated degradation of HY5 in vivo. This chain is E3 ubiquitin-protein ligase CIP8 (CIP8), found in Arabidopsis thaliana (Mouse-ear cress).